Here is a 39-residue protein sequence, read N- to C-terminus: Potassium channel toxin alpha-KTx 2.16 (39 aa).

Cystine bridges form between Cys7/Cys29, Cys13/Cys34, and Cys17/Cys36. The residue at position 39 (Ile39) is an Isoleucine amide.

Belongs to the short scorpion toxin superfamily. Potassium channel inhibitor family. Alpha-KTx 02 subfamily. As to expression, expressed by the venom gland.

The protein resides in the secreted. In terms of biological role, blocks human voltage-gated potassium channels Kv1.2/KCNA2 (IC(50)=0.7 nM), Kv1.3/KCNA3 (IC(50)=26.2 nM) and blocks intermediate conductance calcium-activated potassium channel KCa3.1/KCNN4 (IC(50)=56 nM). This Centruroides tecomanus (Scorpion) protein is Potassium channel toxin alpha-KTx 2.16.